Reading from the N-terminus, the 269-residue chain is Energy-coupling factor transporter transmembrane protein EcfT (269 aa).

5 helical membrane-spanning segments follow: residues 28–48, 49–69, 73–93, 109–129, and 246–266; these read MIIY…LLLL, AFTL…FNGV, IGII…GSVL, AILI…LTLT, and TLAI…KSPS.

The protein belongs to the energy-coupling factor EcfT family. Forms a stable energy-coupling factor (ECF) transporter complex composed of 2 membrane-embedded substrate-binding proteins (S component), 2 ATP-binding proteins (A component) and 2 transmembrane proteins (T component). May be able to interact with more than 1 S component at a time.

Its subcellular location is the cell membrane. Its function is as follows. Transmembrane (T) component of an energy-coupling factor (ECF) ABC-transporter complex. Unlike classic ABC transporters this ECF transporter provides the energy necessary to transport a number of different substrates. The protein is Energy-coupling factor transporter transmembrane protein EcfT of Streptococcus equi subsp. equi (strain 4047).